Reading from the N-terminus, the 542-residue chain is CTP synthase (542 aa).

The tract at residues 1–265 (MTRYIFITGG…DDEVLSVFGI (265 aa)) is amidoligase domain. CTP is bound at residue Ser-13. UTP is bound at residue Ser-13. ATP-binding positions include 14-19 (SLGKGL) and Asp-71. Asp-71 and Glu-139 together coordinate Mg(2+). CTP contacts are provided by residues 146-148 (DIE), 186-191 (KTKPTQ), and Lys-222. UTP contacts are provided by residues 186-191 (KTKPTQ) and Lys-222. In terms of domain architecture, Glutamine amidotransferase type-1 spans 291-541 (TIAIVGKYTG…VEAAVEQSRL (251 aa)). Gly-353 contacts L-glutamine. Cys-380 (nucleophile; for glutamine hydrolysis) is an active-site residue. L-glutamine contacts are provided by residues 381–384 (FGMQ), Glu-404, and Arg-469. Residues His-514 and Glu-516 contribute to the active site.

The protein belongs to the CTP synthase family. In terms of assembly, homotetramer.

The catalysed reaction is UTP + L-glutamine + ATP + H2O = CTP + L-glutamate + ADP + phosphate + 2 H(+). The enzyme catalyses L-glutamine + H2O = L-glutamate + NH4(+). It catalyses the reaction UTP + NH4(+) + ATP = CTP + ADP + phosphate + 2 H(+). It functions in the pathway pyrimidine metabolism; CTP biosynthesis via de novo pathway; CTP from UDP: step 2/2. With respect to regulation, allosterically activated by GTP, when glutamine is the substrate; GTP has no effect on the reaction when ammonia is the substrate. The allosteric effector GTP functions by stabilizing the protein conformation that binds the tetrahedral intermediate(s) formed during glutamine hydrolysis. Inhibited by the product CTP, via allosteric rather than competitive inhibition. Catalyzes the ATP-dependent amination of UTP to CTP with either L-glutamine or ammonia as the source of nitrogen. Regulates intracellular CTP levels through interactions with the four ribonucleotide triphosphates. The chain is CTP synthase from Parvibaculum lavamentivorans (strain DS-1 / DSM 13023 / NCIMB 13966).